The following is a 391-amino-acid chain: Tyrosinase-like protein phomQ2 (391 aa).

Residues 1 to 21 (MDNVGCEASSSRDPKGKKAVG) form a disordered region. A helical membrane pass occupies residues 61–81 (IRGFICATIIFVVCLGALSYI). Asn97 and Asn141 each carry an N-linked (GlcNAc...) asparagine glycan. The Cu cation site is built by His160 and His169. Residues Asn204, Asn246, and Asn261 are each glycosylated (N-linked (GlcNAc...) asparagine). Cu cation is bound by residues His298 and His324. Asn353 is a glycosylation site (N-linked (GlcNAc...) asparagine).

The protein belongs to the tyrosinase family. The cofactor is Cu(2+).

Its subcellular location is the membrane. Its pathway is mycotoxin biosynthesis. Functionally, tyrosinase-like protein; part of the gene cluster that mediates the biosynthesis of the phomopsins, a group of hexapeptide mycotoxins which infects lupins and causes lupinosis disease in livestock. Within the pathway, phomQ2 is involved in the generation of the common 13-membered macrocycle, possibly by catalyzing the hydroxylation of Tyr. The pathway starts with the processing of the precursor phomA by several endopeptidases including kexin proteases as well as the cluster-specific S41 family peptidase phomP1 and the oligopeptidase phomG to produce 10 identical copies of the hexapeptide Tyr-Val-Ile-Pro-Ile-Asp. After being excised from the precursor peptide, the core peptides are cyclized and modified post-translationally by enzymes encoded within the gene cluster. The timing and order of proteolysis of the phomA precursor and PTMs are still unknown. Two tyrosinase-like enzymes, phomQ1 and phomQ2, catalyze the chlorination and hydroxylation of Tyr, respectively. PhomYb, is proposed to be involved in the construction of the macrocyclic structure. The other 4 ustYa family proteins may be involved in PTMs that generate the unique structure of phomopsin A. PhomYa is required for the hydroxylation of C-beta of Tyr. PhomYc, phomYd, and phomYe are responsible for the biosynthesis of 2,3-dehydroisoleucine (dIle), 2,3-dehydroaspartic acid (dAsp), and 3,4-dehydroproline (dPro), respectively. While dIle formation by phomYc is indispensable for the installation of dAsp by phomYd, the order of the other PTMs have not been elucidated yet. Most of the biosynthetic enzymes likely have broad substrate specificity, and thus, there might be a metabolic grid from a precursor to phomopsin A. The enzyme(s) responsible for the biosynthesis of 3,4-dehydrovaline (dVal) have also not been identified yet. Finally, phomM acts as an S-adenosylmethionine-dependent alpha-N-methyltransferase that catalyzes two successive N-methylation reactions, converting N-desmethyl-phomopsin A to phomopsin A and phomopsin A further to an N,N-dimethylated congener called phomopsin E. This chain is Tyrosinase-like protein phomQ2, found in Diaporthe leptostromiformis (Lupinosis disease fungus).